Reading from the N-terminus, the 170-residue chain is Alpha-crystallin A chain (170 aa).

Met1 carries the N-acetylmethionine modification. Residues 1–63 (MDVTIQHPWF…RTALDSGISE (63 aa)) form a required for complex formation with BFSP1 and BFSP2 region. Gln6 is subject to Deamidated glutamine; partial. The residue at position 45 (Ser45) is a Phosphoserine. Residue Gln50 is modified to Deamidated glutamine; partial. In terms of domain architecture, sHSP spans 52 to 161 (LFRTALDSGI…GERTIPVSRE (110 aa)). At Lys99 the chain carries N6-acetyllysine. Residue His100 participates in Zn(2+) binding. Asn101 carries the post-translational modification Deamidated asparagine; partial. Glu102, His107, and His151 together coordinate Zn(2+). Residues 144–170 (PKLVDPSHGERTIPVSREEKPSSAPSS) form a disordered region. Residues 148 to 164 (DPSHGERTIPVSREEKP) show a composition bias toward basic and acidic residues. Ser159 carries an O-linked (GlcNAc) serine glycan.

This sequence belongs to the small heat shock protein (HSP20) family. Heteromer composed of three CRYAA and one CRYAB subunits. Inter-subunit bridging via zinc ions enhances stability, which is crucial as there is no protein turn over in the lens. Can also form homodimers and homotetramers (dimers of dimers) which serve as the building blocks of homooligomers. Within homooligomers, the zinc-binding motif is created from residues of 3 different molecules. His-100 and Glu-102 from one molecule are ligands of the zinc ion, and His-107 and His-151 residues from additional molecules complete the site with tetrahedral coordination geometry. Part of a complex required for lens intermediate filament formation composed of BFSP1, BFSP2 and CRYAA. In terms of processing, acetylation at Lys-99 may increase chaperone activity. Undergoes age-dependent proteolytical cleavage at the C-terminus.

It is found in the cytoplasm. The protein localises to the nucleus. In terms of biological role, contributes to the transparency and refractive index of the lens. Acts as a chaperone, preventing aggregation of various proteins under a wide range of stress conditions. Required for the correct formation of lens intermediate filaments as part of a complex composed of BFSP1, BFSP2 and CRYAA. The chain is Alpha-crystallin A chain (CRYAA) from Tamandua mexicana (Northern Tamandua).